The following is a 361-amino-acid chain: NAD(P)H-quinone oxidoreductase subunit 1, chloroplastic (361 aa).

6 helical membrane passes run 25-45 (IWLL…VLVI), 102-122 (VAVV…HLVL), 125-145 (LSIG…GLLM), 246-266 (YSGI…LVSS), 298-318 (VFGT…FLFI), and 334-354 (LLNL…LLTT).

The protein belongs to the complex I subunit 1 family. NDH is composed of at least 16 different subunits, 5 of which are encoded in the nucleus.

Its subcellular location is the plastid. The protein resides in the chloroplast thylakoid membrane. It catalyses the reaction a plastoquinone + NADH + (n+1) H(+)(in) = a plastoquinol + NAD(+) + n H(+)(out). The catalysed reaction is a plastoquinone + NADPH + (n+1) H(+)(in) = a plastoquinol + NADP(+) + n H(+)(out). NDH shuttles electrons from NAD(P)H:plastoquinone, via FMN and iron-sulfur (Fe-S) centers, to quinones in the photosynthetic chain and possibly in a chloroplast respiratory chain. The immediate electron acceptor for the enzyme in this species is believed to be plastoquinone. Couples the redox reaction to proton translocation, and thus conserves the redox energy in a proton gradient. The polypeptide is NAD(P)H-quinone oxidoreductase subunit 1, chloroplastic (Nymphaea alba (White water-lily)).